Consider the following 88-residue polypeptide: Small ribosomal subunit protein uS17 (88 aa).

This sequence belongs to the universal ribosomal protein uS17 family. Part of the 30S ribosomal subunit.

In terms of biological role, one of the primary rRNA binding proteins, it binds specifically to the 5'-end of 16S ribosomal RNA. This Prochlorococcus marinus (strain MIT 9312) protein is Small ribosomal subunit protein uS17.